The following is a 606-amino-acid chain: Elongation factor 4 (606 aa).

In terms of domain architecture, tr-type G spans 10-192 (IRKKNFCIIA…AICKYVPSPR (183 aa)). Residues 22 to 27 (DHGKST) and 139 to 142 (NKID) each bind GTP.

It belongs to the TRAFAC class translation factor GTPase superfamily. Classic translation factor GTPase family. LepA subfamily.

Its subcellular location is the cell inner membrane. The enzyme catalyses GTP + H2O = GDP + phosphate + H(+). Its function is as follows. Required for accurate and efficient protein synthesis under certain stress conditions. May act as a fidelity factor of the translation reaction, by catalyzing a one-codon backward translocation of tRNAs on improperly translocated ribosomes. Back-translocation proceeds from a post-translocation (POST) complex to a pre-translocation (PRE) complex, thus giving elongation factor G a second chance to translocate the tRNAs correctly. Binds to ribosomes in a GTP-dependent manner. In Borreliella burgdorferi (strain ATCC 35210 / DSM 4680 / CIP 102532 / B31) (Borrelia burgdorferi), this protein is Elongation factor 4.